The following is a 453-amino-acid chain: Alpha-2B adrenergic receptor (453 aa).

Residues 1 to 17 (MSGPAMVHQEPYSVQAT) are Extracellular-facing. The helical transmembrane segment at 18–42 (AAIASAITFLILFTIFGNALVILAV) threads the bilayer. The Cytoplasmic segment spans residues 43–54 (LTSRSLRAPQNL). A helical membrane pass occupies residues 55–80 (FLVSLAAADILVATLIIPFSLANELL). Over 81 to 90 (GYWYFWRAWC) the chain is Extracellular. Cys-90 and Cys-169 are oxidised to a cystine. A helical transmembrane segment spans residues 91–113 (EVYLALDVLFCTSSIVHLCAISL). The Cytoplasmic segment spans residues 114–135 (DRYWAVSRALEYNSKRTPRRIK). A helical transmembrane segment spans residues 136 to 158 (CIILTVWLIAAVISLPPLIYKGD). The Extracellular segment spans residues 159 to 174 (QRPEPHGLPQCELNQE). The helical transmembrane segment at 175-198 (AWYILASSIGSFFAPCLIMILVYL) threads the bilayer. At 199 to 375 (RIYVIAKRSH…LSREKRFTFV (177 aa)) the chain is on the cytoplasmic side. The disordered stretch occupies residues 214 to 329 (AKRGSGEGES…ASPASVFNPP (116 aa)). Residues 303–314 (AEEDEEEVEECE) are compositionally biased toward acidic residues. A helical membrane pass occupies residues 376-399 (LAVVIGVFVVCWFPFFFSYSLGAI). Residues 400 to 408 (CPQHCKVPH) lie on the Extracellular side of the membrane. The chain crosses the membrane as a helical span at residues 409–432 (GLFQFFFWIGYCNSSLNPVIYTIF). The Cytoplasmic portion of the chain corresponds to 433–453 (NQDFRRAFRRILCRQWTQTGW). A lipid anchor (S-palmitoyl cysteine) is attached at Cys-445.

Belongs to the G-protein coupled receptor 1 family. Adrenergic receptor subfamily. ADRA2B sub-subfamily. As to quaternary structure, interacts with RAB26. Interacts with PPP1R9B. Interacts with GGA1, GGA2 and GGA3.

It is found in the cell membrane. In terms of biological role, alpha-2 adrenergic receptors mediate the catecholamine-induced inhibition of adenylate cyclase through the action of G proteins. The sequence is that of Alpha-2B adrenergic receptor (Adra2b) from Mus musculus (Mouse).